Here is a 133-residue protein sequence, read N- to C-terminus: NADPH-dependent 7-cyano-7-deazaguanine reductase (133 aa).

The Thioimide intermediate role is filled by Cys-49. Asp-56 acts as the Proton donor in catalysis. Residues 71-73 (IEL) and 90-91 (HE) contribute to the substrate site.

The protein belongs to the GTP cyclohydrolase I family. QueF type 1 subfamily.

Its subcellular location is the cytoplasm. The catalysed reaction is 7-aminomethyl-7-carbaguanine + 2 NADP(+) = 7-cyano-7-deazaguanine + 2 NADPH + 3 H(+). The protein operates within tRNA modification; tRNA-queuosine biosynthesis. Functionally, catalyzes the NADPH-dependent reduction of 7-cyano-7-deazaguanine (preQ0) to 7-aminomethyl-7-deazaguanine (preQ1). This Leptospira borgpetersenii serovar Hardjo-bovis (strain JB197) protein is NADPH-dependent 7-cyano-7-deazaguanine reductase.